A 62-amino-acid chain; its full sequence is Large ribosomal subunit protein uL30 (62 aa).

This sequence belongs to the universal ribosomal protein uL30 family. In terms of assembly, part of the 50S ribosomal subunit.

The sequence is that of Large ribosomal subunit protein uL30 from Pseudoalteromonas atlantica (strain T6c / ATCC BAA-1087).